The sequence spans 333 residues: Probable HTH-type transcriptional repressor ExuR (333 aa).

The HTH lacI-type domain occupies 2–56 (VTIKDIAKLANVSHTTVSRALNNSPYIKEHTKKKILELAEQLNYTPNVNAKSLAM). Positions 4 to 23 (IKDIAKLANVSHTTVSRALN) form a DNA-binding region, H-T-H motif.

Functionally, transcriptional repressor for the exu locus which is required for galacturonate utilization. In Bacillus subtilis (strain 168), this protein is Probable HTH-type transcriptional repressor ExuR (exuR).